Here is a 463-residue protein sequence, read N- to C-terminus: Asparagine--tRNA ligase (463 aa).

It belongs to the class-II aminoacyl-tRNA synthetase family. Homodimer.

It is found in the cytoplasm. It catalyses the reaction tRNA(Asn) + L-asparagine + ATP = L-asparaginyl-tRNA(Asn) + AMP + diphosphate + H(+). This chain is Asparagine--tRNA ligase, found in Desulfitobacterium hafniense (strain Y51).